The sequence spans 455 residues: UDP-N-acetylmuramoylalanine--D-glutamate ligase (455 aa).

120–126 serves as a coordination point for ATP; sequence GSNGKTT.

It belongs to the MurCDEF family.

The protein localises to the cytoplasm. The catalysed reaction is UDP-N-acetyl-alpha-D-muramoyl-L-alanine + D-glutamate + ATP = UDP-N-acetyl-alpha-D-muramoyl-L-alanyl-D-glutamate + ADP + phosphate + H(+). It participates in cell wall biogenesis; peptidoglycan biosynthesis. Functionally, cell wall formation. Catalyzes the addition of glutamate to the nucleotide precursor UDP-N-acetylmuramoyl-L-alanine (UMA). This Pediococcus pentosaceus (strain ATCC 25745 / CCUG 21536 / LMG 10740 / 183-1w) protein is UDP-N-acetylmuramoylalanine--D-glutamate ligase.